The chain runs to 2959 residues: uncharacterized protein (2959 aa).

The protein resides in the virion. This is an uncharacterized protein from Acanthamoeba polyphaga mimivirus (APMV).